Reading from the N-terminus, the 1191-residue chain is Solute carrier family 12 member 2 (1191 aa).

The interval 1-166 (MEPAFPASSA…MSEGSLHSSG (166 aa)) is disordered. Over 1 to 258 (MEPAFPASSA…ADNKGVVKFG (258 aa)) the chain is Cytoplasmic. 4 stretches are compositionally biased toward low complexity: residues 13-25 (QSQSGPEPGAGQQ), 59-69 (KGQTAAQPAAA), 80-99 (AAAPSPASPAAAAEPPAAAA), and 131-141 (SASSAHGGHQP). The span at 142-155 (PSESMNGYPQNGDT) shows a compositional bias: polar residues. A phosphothreonine; by OXSR1 and STK39 mark is found at T175, T179, and T184. A phosphothreonine mark is found at T189 and T202. A discontinuously helical membrane pass occupies residues 259–288 (WIKGVLVRCMLNIWGVMLFIRLSWIVGHAG). L269 serves as a coordination point for Na(+). K(+) contacts are provided by N270 and I271. Residue W272 participates in Na(+) binding. Residues G273, V274, and M275 each coordinate chloride. The chain crosses the membrane as a helical span at residues 289 to 308 (IGLALLVIGTATVVTTITGL). The Cytoplasmic portion of the chain corresponds to 309-339 (STSAITTNGFVRGGGAYYLISRSLGPEFGGA). Residues 340–367 (IGLIFAFANAVAVAMYVVGFAETVRDLL) form a helical membrane-spanning segment. Chloride is bound at residue F344. Y355 serves as a coordination point for K(+). Residues 368–377 (VEHNALMIDE) lie on the Extracellular side of the membrane. A helical membrane pass occupies residues 378–401 (MSDIRIIGSVTIVVLFGISVAGME). Topologically, residues 402-404 (WEA) are cytoplasmic. A helical membrane pass occupies residues 405-426 (KAQIVLLGILLLAIVNFTVGTF). Residues 427–458 (IPANDKRAKGFFNYRGEIFSENFVPDFRDGED) lie on the Extracellular side of the membrane. A discontinuously helical membrane pass occupies residues 459–476 (FFSVFAIFFPAATGILAG). P468, A469, and T471 together coordinate K(+). Positions 468 and 469 each coordinate chloride. Chloride-binding residues include G472 and I473. Topologically, residues 477–491 (ANISGDLADPQLAIP) are cytoplasmic. Residues 492-513 (KGTLLAILITTIVYAGAAVSVG) traverse the membrane as a helical segment. Residues 514-571 (SCIVREATGNLTDAIIPGTVTNCTNVACKLGFNFSSCATNKCSYGLMNDFQVMSLVSG) lie on the Extracellular side of the membrane. Residues N523 and N535 are each glycosylated (N-linked (GlcNAc...) asparagine). A disulfide bond links C536 and C541. N546 carries an N-linked (GlcNAc...) asparagine glycan. A disulfide bridge links C550 with C555. A helical membrane pass occupies residues 572–596 (FGPLITAGIFSATLSSALASLVSAP). Na(+)-binding residues include A583, S586, and S587. Residues 597–624 (KIFQALCKDNIYPGLHVFSVGYGKNNEP) lie on the Cytoplasmic side of the membrane. 2 helical membrane passes run 625–645 (LRGYVLTFFIGLGFILIAELN) and 646–664 (VIAPIISNFFLASYALINF). Chloride-binding residues include F655 and Y659. Residues 665-687 (SVFHASLAKSPGWRPAFRFYNMW) lie on the Cytoplasmic side of the membrane. Helical transmembrane passes span 688–705 (ISLIGAILCCGVMFVINW) and 706–718 (WAALLTNVIVLAL). Residues 719-1191 (YIYVTYKKPD…NHQSVLTFYS (473 aa)) lie on the Cytoplasmic side of the membrane. The interval 734–751 (STQALTYLNALQHAIRLT) is scissor helix. The tract at residues 929-972 (HSDADSSKPSSKSVSETNSPAVCQDQKDEEDDGKASTQPLLKKE) is disordered. Over residues 935 to 948 (SKPSSKSVSETNSP) the composition is skewed to low complexity. T1114 carries the phosphothreonine modification.

This sequence belongs to the SLC12A transporter family. In terms of assembly, homodimer. Phosphorylated at Thr-175, Thr-179 and Thr-184 by OXSR1/OSR1 and STK39/SPAK downstream of WNK kinases (WNK1, WNK2, WNK3 or WNK4), promoting its activity. In terms of tissue distribution, strongly expressed in rectal gland, brain, gill and intestine. Also detected at lower levels in heart, kidney, and testis.

It localises to the basolateral cell membrane. It catalyses the reaction K(+)(out) + 2 chloride(out) + Na(+)(out) = K(+)(in) + 2 chloride(in) + Na(+)(in). With respect to regulation, activated following phosphorylation by OXSR1/OSR1 and STK39/SPAK. Inhibited by bumetanide. Functionally, cation-chloride cotransporter which mediates the electroneutral transport of chloride, potassium and/or sodium ions across the membrane. Plays a vital role in the regulation of ionic balance and cell volume. The polypeptide is Solute carrier family 12 member 2 (SLC12A2) (Squalus acanthias (Spiny dogfish)).